Reading from the N-terminus, the 311-residue chain is HPr kinase/phosphorylase (311 aa).

Catalysis depends on residues His-138 and Lys-159. ATP is bound at residue 153–160 (GKSGVGKS). Position 160 (Ser-160) interacts with Mg(2+). The active-site Proton acceptor; for phosphorylation activity. Proton donor; for dephosphorylation activity is the Asp-177. The important for the catalytic mechanism of both phosphorylation and dephosphorylation stretch occupies residues 201 to 210 (LEIRGLGIIN). Glu-202 is a Mg(2+) binding site. Residue Arg-243 is part of the active site. The interval 264-269 (PVRPGR) is important for the catalytic mechanism of dephosphorylation.

It belongs to the HPrK/P family. In terms of assembly, homohexamer. The cofactor is Mg(2+).

The enzyme catalyses [HPr protein]-L-serine + ATP = [HPr protein]-O-phospho-L-serine + ADP + H(+). It catalyses the reaction [HPr protein]-O-phospho-L-serine + phosphate + H(+) = [HPr protein]-L-serine + diphosphate. Catalyzes the ATP- as well as the pyrophosphate-dependent phosphorylation of a specific serine residue in HPr, a phosphocarrier protein of the phosphoenolpyruvate-dependent sugar phosphotransferase system (PTS). HprK/P also catalyzes the pyrophosphate-producing, inorganic phosphate-dependent dephosphorylation (phosphorolysis) of seryl-phosphorylated HPr (P-Ser-HPr). The two antagonistic activities of HprK/P are regulated by several intracellular metabolites, which change their concentration in response to the absence or presence of rapidly metabolisable carbon sources (glucose, fructose, etc.) in the growth medium. Also phosphorylates/dephosphorylates the HPr-like catabolite repression protein crh on a specific serine residue. Therefore, by controlling the phosphorylation state of HPr and crh, HPrK/P is a sensor enzyme that plays a major role in the regulation of carbon metabolism and sugar transport: it mediates carbon catabolite repression (CCR), and regulates PTS-catalyzed carbohydrate uptake and inducer exclusion. The polypeptide is HPr kinase/phosphorylase (Geobacillus kaustophilus (strain HTA426)).